Reading from the N-terminus, the 874-residue chain is Alanine--tRNA ligase (874 aa).

Residues H564, H568, C665, and H669 each coordinate Zn(2+).

The protein belongs to the class-II aminoacyl-tRNA synthetase family. Zn(2+) is required as a cofactor.

It is found in the cytoplasm. It catalyses the reaction tRNA(Ala) + L-alanine + ATP = L-alanyl-tRNA(Ala) + AMP + diphosphate. In terms of biological role, catalyzes the attachment of alanine to tRNA(Ala) in a two-step reaction: alanine is first activated by ATP to form Ala-AMP and then transferred to the acceptor end of tRNA(Ala). Also edits incorrectly charged Ser-tRNA(Ala) and Gly-tRNA(Ala) via its editing domain. The chain is Alanine--tRNA ligase from Burkholderia orbicola (strain MC0-3).